The primary structure comprises 1213 residues: Oligopeptidase PhomG' (1213 aa).

His447 contacts Zn(2+). Glu448 is an active-site residue. The Zn(2+) site is built by His451 and His454.

This sequence belongs to the peptidase M3 family. In terms of assembly, monomer. The cofactor is Zn(2+).

It functions in the pathway mycotoxin biosynthesis. Its function is as follows. Oligopeptidase; part of the gene cluster that mediates the biosynthesis of the phomopsins, a group of hexapeptide mycotoxins which infects lupins and causes lupinosis disease in livestock. Within the pathway, phomG and phomG' are probably involved in the processing of the phomA and phomA' precursors. The pathway starts with the processing of the precursor phomA by several endopeptidases including kexin proteases as well as the cluster-specific S41 family peptidase phomP1 and the oligopeptidase phomG to produce 10 identical copies of the hexapeptide Tyr-Val-Ile-Pro-Ile-Asp. After being excised from the precursor peptide, the core peptides are cyclized and modified post-translationally by enzymes encoded within the gene cluster. The timing and order of proteolysis of the phomA precursor and PTMs are still unknown. Two tyrosinase-like enzymes, phomQ1 and phomQ2, catalyze the chlorination and hydroxylation of Tyr, respectively. PhomYb, is proposed to be involved in the construction of the macrocyclic structure. The other 4 ustYa family proteins may be involved in PTMs that generate the unique structure of phomopsin A. PhomYa is required for the hydroxylation of C-beta of Tyr. PhomYc, phomYd, and phomYe are responsible for the biosynthesis of 2,3-dehydroisoleucine (dIle), 2,3-dehydroaspartic acid (dAsp), and 3,4-dehydroproline (dPro), respectively. While dIle formation by phomYc is indispensable for the installation of dAsp by phomYd, the order of the other PTMs have not been elucidated yet. Most of the biosynthetic enzymes likely have broad substrate specificity, and thus, there might be a metabolic grid from a precursor to phomopsin A. The enzyme(s) responsible for the biosynthesis of 3,4-dehydrovaline (dVal) have also not been identified yet. Finally, phomM acts as an S-adenosylmethionine-dependent alpha-N-methyltransferase that catalyzes two successive N-methylation reactions, converting N-desmethyl-phomopsin A to phomopsin A and phomopsin A further to an N,N-dimethylated congener called phomopsin E. This Diaporthe leptostromiformis (Lupinosis disease fungus) protein is Oligopeptidase PhomG'.